A 261-amino-acid chain; its full sequence is Indole-3-glycerol phosphate synthase (261 aa).

The protein belongs to the TrpC family.

It carries out the reaction 1-(2-carboxyphenylamino)-1-deoxy-D-ribulose 5-phosphate + H(+) = (1S,2R)-1-C-(indol-3-yl)glycerol 3-phosphate + CO2 + H2O. Its pathway is amino-acid biosynthesis; L-tryptophan biosynthesis; L-tryptophan from chorismate: step 4/5. The sequence is that of Indole-3-glycerol phosphate synthase from Burkholderia mallei (strain NCTC 10247).